The primary structure comprises 407 residues: Imidazolonepropionase (407 aa).

Residues H68 and H70 each contribute to the Fe(3+) site. H68 and H70 together coordinate Zn(2+). 4-imidazolone-5-propanoate is bound by residues R77, Y140, and H173. Y140 lines the N-formimidoyl-L-glutamate pocket. Residue H238 coordinates Fe(3+). H238 is a binding site for Zn(2+). Residue Q241 coordinates 4-imidazolone-5-propanoate. Position 313 (D313) interacts with Fe(3+). Residue D313 participates in Zn(2+) binding. N-formimidoyl-L-glutamate is bound by residues N315 and G317. 4-imidazolone-5-propanoate is bound at residue T318.

The protein belongs to the metallo-dependent hydrolases superfamily. HutI family. Requires Zn(2+) as cofactor. Fe(3+) is required as a cofactor.

It localises to the cytoplasm. The catalysed reaction is 4-imidazolone-5-propanoate + H2O = N-formimidoyl-L-glutamate. It participates in amino-acid degradation; L-histidine degradation into L-glutamate; N-formimidoyl-L-glutamate from L-histidine: step 3/3. Its function is as follows. Catalyzes the hydrolytic cleavage of the carbon-nitrogen bond in imidazolone-5-propanoate to yield N-formimidoyl-L-glutamate. It is the third step in the universal histidine degradation pathway. The sequence is that of Imidazolonepropionase from Burkholderia orbicola (strain MC0-3).